A 39-amino-acid chain; its full sequence is Neuropeptide F (39 aa).

Phe39 is modified (phenylalanine amide).

The protein belongs to the NPY family. Neuronal somata and fibers.

The protein localises to the secreted. In terms of biological role, may have an important physiological role in neuroregulation. This Cornu aspersum (Brown garden snail) protein is Neuropeptide F.